Here is a 651-residue protein sequence, read N- to C-terminus: Receptor-like serine/threonine-protein kinase At4g25390 (651 aa).

The N-terminal stretch at 1–25 (MPSRSISAPVPVLAPAPIVSSLVPA) is a signal peptide. Topologically, residues 26-40 (APSGHQNKTTRIFPP) are extracellular. N32 carries an N-linked (GlcNAc...) asparagine glycan. The helical transmembrane segment at 41-61 (FVVAGAGAGFSLFITLSVCFC) threads the bilayer. Over 62 to 651 (KFSRKRSSPP…PLKTTRKQRR (590 aa)) the chain is Cytoplasmic. The segment at 66 to 87 (KRSSPPAENASSSPRRPSPREF) is disordered. Over residues 69 to 87 (SPPAENASSSPRRPSPREF) the composition is skewed to low complexity. The 535-residue stretch at 99 to 633 (FSQANRLGQG…LKGEVNLPEL (535 aa)) folds into the Protein kinase domain. ATP-binding positions include 105–113 (LGQGGFGVV) and K127. D225 serves as the catalytic Proton acceptor.

This sequence belongs to the protein kinase superfamily. Ser/Thr protein kinase family.

Its subcellular location is the cell membrane. It carries out the reaction L-seryl-[protein] + ATP = O-phospho-L-seryl-[protein] + ADP + H(+). The enzyme catalyses L-threonyl-[protein] + ATP = O-phospho-L-threonyl-[protein] + ADP + H(+). This is Receptor-like serine/threonine-protein kinase At4g25390 from Arabidopsis thaliana (Mouse-ear cress).